A 108-amino-acid chain; its full sequence is Insulin (108 aa).

The first 23 residues, 1–23 (MALWILLPLLALLILWGPDPAQA), serve as a signal peptide directing secretion. Disulfide bonds link C30-C94 and C43-C107. Residues 57–88 (EVEDPQVGQVELGAGPGAGSEQTLALEVARQA) constitute a propeptide, c peptide.

Belongs to the insulin family. In terms of assembly, heterodimer of a B chain and an A chain linked by two disulfide bonds.

Its subcellular location is the secreted. Its function is as follows. Insulin decreases blood glucose concentration. It increases cell permeability to monosaccharides, amino acids and fatty acids. It accelerates glycolysis, the pentose phosphate cycle, and glycogen synthesis in liver. This Rodentia sp protein is Insulin (INS).